The following is a 261-amino-acid chain: Cytochrome c oxidase subunit 3 (261 aa).

Residues methionine 1–proline 15 are Mitochondrial matrix-facing. A helical transmembrane segment spans residues tryptophan 16–tryptophan 34. At phenylalanine 35 to threonine 40 the chain is on the mitochondrial intermembrane side. A helical membrane pass occupies residues threonine 41–threonine 66. Residues phenylalanine 67 to threonine 72 lie on the Mitochondrial matrix side of the membrane. A helical transmembrane segment spans residues proline 73–serine 105. Residues leucine 106–glutamate 128 lie on the Mitochondrial intermembrane side of the membrane. Residues valine 129–methionine 152 form a helical membrane-spanning segment. The Mitochondrial matrix segment spans residues glutamate 153 to asparagine 155. Residues arginine 156 to glutamate 183 traverse the membrane as a helical segment. At alanine 184–aspartate 190 the chain is on the mitochondrial intermembrane side. The helical transmembrane segment at glycine 191–leucine 223 threads the bilayer. Topologically, residues lysine 224–histidine 232 are mitochondrial matrix. A helical transmembrane segment spans residues phenylalanine 233 to isoleucine 256. Topologically, residues tyrosine 257–serine 261 are mitochondrial intermembrane.

The protein belongs to the cytochrome c oxidase subunit 3 family. As to quaternary structure, component of the cytochrome c oxidase (complex IV, CIV), a multisubunit enzyme composed of 14 subunits. The complex is composed of a catalytic core of 3 subunits MT-CO1, MT-CO2 and MT-CO3, encoded in the mitochondrial DNA, and 11 supernumerary subunits COX4I, COX5A, COX5B, COX6A, COX6B, COX6C, COX7A, COX7B, COX7C, COX8 and NDUFA4, which are encoded in the nuclear genome. The complex exists as a monomer or a dimer and forms supercomplexes (SCs) in the inner mitochondrial membrane with NADH-ubiquinone oxidoreductase (complex I, CI) and ubiquinol-cytochrome c oxidoreductase (cytochrome b-c1 complex, complex III, CIII), resulting in different assemblies (supercomplex SCI(1)III(2)IV(1) and megacomplex MCI(2)III(2)IV(2)).

Its subcellular location is the mitochondrion inner membrane. The enzyme catalyses 4 Fe(II)-[cytochrome c] + O2 + 8 H(+)(in) = 4 Fe(III)-[cytochrome c] + 2 H2O + 4 H(+)(out). Component of the cytochrome c oxidase, the last enzyme in the mitochondrial electron transport chain which drives oxidative phosphorylation. The respiratory chain contains 3 multisubunit complexes succinate dehydrogenase (complex II, CII), ubiquinol-cytochrome c oxidoreductase (cytochrome b-c1 complex, complex III, CIII) and cytochrome c oxidase (complex IV, CIV), that cooperate to transfer electrons derived from NADH and succinate to molecular oxygen, creating an electrochemical gradient over the inner membrane that drives transmembrane transport and the ATP synthase. Cytochrome c oxidase is the component of the respiratory chain that catalyzes the reduction of oxygen to water. Electrons originating from reduced cytochrome c in the intermembrane space (IMS) are transferred via the dinuclear copper A center (CU(A)) of subunit 2 and heme A of subunit 1 to the active site in subunit 1, a binuclear center (BNC) formed by heme A3 and copper B (CU(B)). The BNC reduces molecular oxygen to 2 water molecules using 4 electrons from cytochrome c in the IMS and 4 protons from the mitochondrial matrix. The protein is Cytochrome c oxidase subunit 3 (MT-CO3) of Gazella saudiya (Saudi gazelle).